Here is a 148-residue protein sequence, read N- to C-terminus: 3-dehydroquinate dehydratase (148 aa).

The Proton acceptor role is filled by tyrosine 23. Positions 74, 80, and 87 each coordinate substrate. Residue histidine 100 is the Proton donor of the active site. Substrate is bound by residues 101–102 and arginine 111; that span reads IS.

This sequence belongs to the type-II 3-dehydroquinase family. As to quaternary structure, homododecamer.

The enzyme catalyses 3-dehydroquinate = 3-dehydroshikimate + H2O. Its pathway is metabolic intermediate biosynthesis; chorismate biosynthesis; chorismate from D-erythrose 4-phosphate and phosphoenolpyruvate: step 3/7. Catalyzes a trans-dehydration via an enolate intermediate. This is 3-dehydroquinate dehydratase from Halothermothrix orenii (strain H 168 / OCM 544 / DSM 9562).